The chain runs to 902 residues: Zinc finger CCCH-type antiviral protein 1 (902 aa).

A2 is modified (N-acetylalanine). The interval 2–254 is N-terminal domain; that stretch reads ADPEVCCFIT…ARSKSRDRFF (253 aa). The Nuclear localization signal motif lies at 69 to 76; that stretch reads RARVCRRK. 4 consecutive C3H1-type zinc fingers follow at residues 73–86, 88–110, 150–172, and 169–193; these read CRRK…DNLH, CKLN…KYSH, CKSY…SRLH, and SRLH…SHNL. The segment at 221–251 is disordered; sequence SKHMQKNPPGPRAPSSHRRNMAYRARSKSRD. The tract at residues 224–254 is binding to EXOSC5; that stretch reads MQKNPPGPRAPSSHRRNMAYRARSKSRDRFF. Over residues 235–247 the composition is skewed to basic residues; the sequence is SSHRRNMAYRARS. A phosphoserine; by GSK3-beta mark is found at S257, S263, S267, and S271. Residues 265 to 278 are compositionally biased toward polar residues; the sequence is SASAERSCTPSPDQ. 2 disordered regions span residues 265 to 287 and 299 to 373; these read SASA…SLED and YLGS…GARR. T273 carries the phosphothreonine modification. S275 and S284 each carry phosphoserine. Positions 285-292 match the Nuclear export signal motif; that stretch reads LEDAPVDD. Residues S302, S327, S335, S355, S378, and S387 each carry the phosphoserine modification. Composition is skewed to polar residues over residues 310–336 and 344–369; these read SGSS…NGSQ and PGST…TNDQ. T393 bears the Phosphothreonine mark. Residues S407, S469, S492, and S494 each carry the phosphoserine modification. Residues 445–481 form a disordered region; that stretch reads LNYKSTSSGHREISSPRIQDAGPASRDVQATGRIADD. At T554 the chain carries Phosphothreonine. A phosphoserine mark is found at Y572 and S590. In terms of domain architecture, WWE spans 594–681; that stretch reads SVTKPANSVF…ASKTQKDVIR (88 aa). In terms of domain architecture, PARP catalytic spans 716–902; it reads PQEDFCFLSS…YTEDKACVIS (187 aa).

The protein belongs to the ARTD/PARP family. Homodimer or homooligomer. Homooligomerization is essential for its antiviral activity. Interacts with EXOSC5. Interacts (via N-terminal domain) with DDX17 in an RNA-independent manner. Interacts with EXOSC3, EXOSC7, DCP2 and DCP1A. Interacts with PARN in an RNA-independent manner. Interacts with XRN1 in an RNA-dependent manner. Isoform 2 interacts (via zinc-fingers) with RIGI in an RNA-dependent manner. Interacts (via N-terminal domain) with DHX30 (via N-terminus) in an RNA-independent manner. Post-translationally, phosphorylation at Ser-275 is essential for sequential phosphorylation of Ser-271, Ser-267, Ser-263 and Ser-257 by GSK3-beta. Phosphorylation by GSK3-beta enhances its antiviral activity.

It localises to the cytoplasm. Its subcellular location is the nucleus. Antiviral protein which inhibits the replication of viruses by recruiting the cellular RNA degradation machineries to degrade the viral mRNAs. Binds to a ZAP-responsive element (ZRE) present in the target viral mRNA, recruits cellular poly(A)-specific ribonuclease PARN to remove the poly(A) tail, and the 3'-5' exoribonuclease complex exosome to degrade the RNA body from the 3'-end. It also recruits the decapping complex DCP1-DCP2 through RNA helicase p72 (DDX17) to remove the cap structure of the viral mRNA to initiate its degradation from the 5'-end. Its target viruses belong to families which include retroviridae: human immunodeficiency virus type 1 (HIV-1), moloney and murine leukemia virus (MoMLV) and xenotropic MuLV-related virus (XMRV), filoviridae: ebola virus (EBOV) and marburg virus (MARV), togaviridae: sindbis virus (SINV) and Ross river virus (RRV). Specifically targets the multiply spliced but not unspliced or singly spliced HIV-1 mRNAs for degradation. Isoform 1 is a more potent viral inhibitor than isoform 2. Isoform 2 acts as a positive regulator of RIGI signaling resulting in activation of the downstream effector IRF3 leading to the expression of type I IFNs and IFN stimulated genes (ISGs). This chain is Zinc finger CCCH-type antiviral protein 1, found in Homo sapiens (Human).